The primary structure comprises 149 residues: Calmodulin (149 aa).

At alanine 2 the chain carries N-acetylalanine. EF-hand domains are found at residues 8–43 (EQIA…LGQN), 44–79 (PTEA…KMKD), 81–116 (DTEE…LGEK), and 117–149 (LTDE…MMAK). 14 residues coordinate Ca(2+): aspartate 21, aspartate 23, aspartate 25, threonine 27, glutamate 32, aspartate 57, aspartate 59, asparagine 61, threonine 63, glutamate 68, aspartate 94, aspartate 96, asparagine 98, and glutamate 105. Lysine 116 is modified (N6,N6,N6-trimethyllysine). Residues aspartate 130, aspartate 132, aspartate 134, glutamine 136, and glutamate 141 each contribute to the Ca(2+) site.

It belongs to the calmodulin family.

Calmodulin mediates the control of a large number of enzymes, ion channels and other proteins by Ca(2+). Among the enzymes to be stimulated by the calmodulin-Ca(2+) complex are a number of protein kinases and phosphatases. The protein is Calmodulin of Heterocapsa triquetra (Dinoflagellate).